Here is a 61-residue protein sequence, read N- to C-terminus: Large ribosomal subunit protein uL30 (61 aa).

It belongs to the universal ribosomal protein uL30 family. Part of the 50S ribosomal subunit.

The chain is Large ribosomal subunit protein uL30 from Fervidobacterium nodosum (strain ATCC 35602 / DSM 5306 / Rt17-B1).